The following is a 224-amino-acid chain: Lipoprotein-releasing system ATP-binding protein LolD (224 aa).

The region spanning 6 to 224 (VRLRELRRSF…VVRLHEGVLE (219 aa)) is the ABC transporter domain. 42–49 (GPSGSGKS) contributes to the ATP binding site.

The protein belongs to the ABC transporter superfamily. Lipoprotein translocase (TC 3.A.1.125) family. In terms of assembly, the complex is composed of two ATP-binding proteins (LolD) and two transmembrane proteins (LolC and LolE).

The protein resides in the cell inner membrane. Its function is as follows. Part of the ABC transporter complex LolCDE involved in the translocation of mature outer membrane-directed lipoproteins, from the inner membrane to the periplasmic chaperone, LolA. Responsible for the formation of the LolA-lipoprotein complex in an ATP-dependent manner. This Novosphingobium aromaticivorans (strain ATCC 700278 / DSM 12444 / CCUG 56034 / CIP 105152 / NBRC 16084 / F199) protein is Lipoprotein-releasing system ATP-binding protein LolD.